Consider the following 489-residue polypeptide: FAD-linked oxidoreductase tazG (489 aa).

An N-terminal signal peptide occupies residues 1-17 (MVAFSAILQTALGLSAA). Residue asparagine 38 is glycosylated (N-linked (GlcNAc...) asparagine). Residues 55–224 (APSYGAGAIK…TSATYRLPEV (170 aa)) enclose the FAD-binding PCMH-type domain. 2 N-linked (GlcNAc...) asparagine glycosylation sites follow: asparagine 242 and asparagine 306.

This sequence belongs to the oxygen-dependent FAD-linked oxidoreductase family. The cofactor is FAD.

It functions in the pathway secondary metabolite biosynthesis. In terms of biological role, FAD-linked oxidoreductase; part of the gene cluster that mediates the biosynthesis of azaterrilone A and other azaphilones, a class of fungal metabolites characterized by a highly oxygenated pyrano-quinone bicyclic core and exhibiting a broad range of bioactivities. The first step of the pathway begins with the non-reducing polyketide synthase tazA that assembles one acetyl-CoA starter unit, five malonyl-CoA units, and catalyzes a series of Claisen condensations, methylation, PT-mediated cyclization, and finally releases the first hexaketide precursor through the R-domain. The tazA product then undergoes reduction on its terminal ketone and the following pyran-ring formation by yet undetermined enzyme(s). Dehydration and enoyl reduction, possibly involving the trans-enoyl reductase tazE leads to the next intermediate. TazD is predicted as an acetyltransferase and might catalyze the acetylation steps leading to the synthesis of azaterrilone A. Azaterrilone A is not the final product of the taz pathway and both the highly reducing polyketide synthase tazB and the dual enzyme tazHJ catalyze late steps of the pathway, leading to the production of the 2 final stereoisomers that contain additional polyketide modification whose structures have still to be determined. The sequence is that of FAD-linked oxidoreductase tazG from Aspergillus terreus (strain NIH 2624 / FGSC A1156).